A 278-amino-acid chain; its full sequence is MAEMELWFTEQQTPDLGFTCKITKTIYTAKTKYQDLAILETKQFGKMLVLDGAVQTTIVDEFCYHELIAHVPLFTHPNPKKVAVIGGGDGGVIREILKHEEVEKAYLIEIDQEVIEASKKYLPEISCALDDKRAEVIITDGIKFVSENKNMFDVIIVDSTDPVGPAVGLFESNFYQAVYECLKEDGLFVAQTESPFYDQDLIRNVFHSIKSIFPITRLYLGFIPTYPSGLWSFTMGSKKYDPLEIDTSKIKRIDTRYYNPELHKALFALPTFVQKIIE.

The 234-residue stretch at Glu-5 to Lys-238 folds into the PABS domain. Gln-34 lines the S-methyl-5'-thioadenosine pocket. Spermidine is bound by residues His-65 and Asp-89. S-methyl-5'-thioadenosine contacts are provided by residues Glu-109 and Asp-140–Gly-141. Asp-158 acts as the Proton acceptor in catalysis. Asp-158 to Asp-161 contributes to the spermidine binding site. Position 165 (Pro-165) interacts with S-methyl-5'-thioadenosine.

This sequence belongs to the spermidine/spermine synthase family. Homodimer or homotetramer.

It is found in the cytoplasm. The enzyme catalyses S-adenosyl 3-(methylsulfanyl)propylamine + putrescine = S-methyl-5'-thioadenosine + spermidine + H(+). It functions in the pathway amine and polyamine biosynthesis; spermidine biosynthesis; spermidine from putrescine: step 1/1. In terms of biological role, catalyzes the irreversible transfer of a propylamine group from the amino donor S-adenosylmethioninamine (decarboxy-AdoMet) to putrescine (1,4-diaminobutane) to yield spermidine. In Caldicellulosiruptor saccharolyticus (strain ATCC 43494 / DSM 8903 / Tp8T 6331), this protein is Polyamine aminopropyltransferase.